A 453-amino-acid chain; its full sequence is Bifunctional protein GlmU (453 aa).

The pyrophosphorylase stretch occupies residues 1–227 (MAVSVIILAA…SIEVMGVNDR (227 aa)). UDP-N-acetyl-alpha-D-glucosamine-binding positions include 8–11 (LAAG), Lys-22, Gln-73, 78–79 (GT), 100–102 (SGD), Gly-137, Glu-152, Asn-167, and Asn-225. Asp-102 serves as a coordination point for Mg(2+). Asn-225 is a binding site for Mg(2+). The segment at 228-248 (QQLAYLERFYQKREAARLMGE) is linker. Residues 249-453 (GVSLSDPDRF…WPGWKRPSKK (205 aa)) are N-acetyltransferase. Arg-331 and Lys-349 together coordinate UDP-N-acetyl-alpha-D-glucosamine. His-361 acts as the Proton acceptor in catalysis. Positions 364 and 375 each coordinate UDP-N-acetyl-alpha-D-glucosamine. Acetyl-CoA contacts are provided by residues Ala-378, 384–385 (NY), Ser-403, Ala-421, and Arg-438. Residues 430-453 (PPGELTLSRTPQKSWPGWKRPSKK) form a disordered region.

It in the N-terminal section; belongs to the N-acetylglucosamine-1-phosphate uridyltransferase family. In the C-terminal section; belongs to the transferase hexapeptide repeat family. Homotrimer. Requires Mg(2+) as cofactor.

The protein localises to the cytoplasm. The catalysed reaction is alpha-D-glucosamine 1-phosphate + acetyl-CoA = N-acetyl-alpha-D-glucosamine 1-phosphate + CoA + H(+). The enzyme catalyses N-acetyl-alpha-D-glucosamine 1-phosphate + UTP + H(+) = UDP-N-acetyl-alpha-D-glucosamine + diphosphate. Its pathway is nucleotide-sugar biosynthesis; UDP-N-acetyl-alpha-D-glucosamine biosynthesis; N-acetyl-alpha-D-glucosamine 1-phosphate from alpha-D-glucosamine 6-phosphate (route II): step 2/2. It participates in nucleotide-sugar biosynthesis; UDP-N-acetyl-alpha-D-glucosamine biosynthesis; UDP-N-acetyl-alpha-D-glucosamine from N-acetyl-alpha-D-glucosamine 1-phosphate: step 1/1. It functions in the pathway bacterial outer membrane biogenesis; LPS lipid A biosynthesis. Its function is as follows. Catalyzes the last two sequential reactions in the de novo biosynthetic pathway for UDP-N-acetylglucosamine (UDP-GlcNAc). The C-terminal domain catalyzes the transfer of acetyl group from acetyl coenzyme A to glucosamine-1-phosphate (GlcN-1-P) to produce N-acetylglucosamine-1-phosphate (GlcNAc-1-P), which is converted into UDP-GlcNAc by the transfer of uridine 5-monophosphate (from uridine 5-triphosphate), a reaction catalyzed by the N-terminal domain. The protein is Bifunctional protein GlmU of Nitrosococcus oceani (strain ATCC 19707 / BCRC 17464 / JCM 30415 / NCIMB 11848 / C-107).